A 1136-amino-acid chain; its full sequence is Unconventional myosin-Ib (1136 aa).

Positions 15–701 (IGVGDMVLLE…TLFKLEDLRK (687 aa)) constitute a Myosin motor domain. Residue S60 is modified to Phosphoserine. An ATP-binding site is contributed by 108 to 115 (GESGAGKT). A Glycyl lysine isopeptide (Lys-Gly) (interchain with G-Cter in SUMO1); alternate cross-link involves residue K287. K287 participates in a covalent cross-link: Glycyl lysine isopeptide (Lys-Gly) (interchain with G-Cter in SUMO2); alternate. The actin-binding stretch occupies residues 578–600 (VATLMKNLQTKNPNYIRCIKPND). IQ domains are found at residues 704–733 (LEDL…SQIV), 728–748 (KKSQ…KRYQ), 750–779 (TKSS…QKRC), 779–808 (CKEA…EARN), 808–837 (NKHA…EARR), and 837–866 (RKHA…ANAG). The TH1 domain occupies 952 to 1136 (KALYPSSVGQ…NNRLLEVAVP (185 aa)).

This sequence belongs to the TRAFAC class myosin-kinesin ATPase superfamily. Myosin family.

Functionally, motor protein that may participate in process critical to neuronal development and function such as cell migration, neurite outgrowth and vesicular transport. In Homo sapiens (Human), this protein is Unconventional myosin-Ib (MYO1B).